The following is a 102-amino-acid chain: ATP synthase subunit c (102 aa).

The next 2 membrane-spanning stretches (helical) occupy residues 34-54 (IGAGVTMIAGSTVGIGQGYIF) and 80-100 (AVSESTAIYGLLISFILIFVA).

It belongs to the ATPase C chain family. In terms of assembly, F-type ATPases have 2 components, F(1) - the catalytic core - and F(0) - the membrane proton channel. F(1) has five subunits: alpha(3), beta(3), gamma(1), delta(1), epsilon(1). F(0) has three main subunits: a(1), b(2) and c(10-14). The alpha and beta chains form an alternating ring which encloses part of the gamma chain. F(1) is attached to F(0) by a central stalk formed by the gamma and epsilon chains, while a peripheral stalk is formed by the delta and b chains.

Its subcellular location is the cell membrane. Functionally, f(1)F(0) ATP synthase produces ATP from ADP in the presence of a proton or sodium gradient. F-type ATPases consist of two structural domains, F(1) containing the extramembraneous catalytic core and F(0) containing the membrane proton channel, linked together by a central stalk and a peripheral stalk. During catalysis, ATP synthesis in the catalytic domain of F(1) is coupled via a rotary mechanism of the central stalk subunits to proton translocation. Key component of the F(0) channel; it plays a direct role in translocation across the membrane. A homomeric c-ring of between 10-14 subunits forms the central stalk rotor element with the F(1) delta and epsilon subunits. The polypeptide is ATP synthase subunit c (Mycoplasma genitalium (strain ATCC 33530 / DSM 19775 / NCTC 10195 / G37) (Mycoplasmoides genitalium)).